Reading from the N-terminus, the 160-residue chain is Crossover junction endodeoxyribonuclease RuvC (160 aa).

Active-site residues include Asp-7, Glu-73, and Asp-145. 3 residues coordinate Mg(2+): Asp-7, Glu-73, and Asp-145.

It belongs to the RuvC family. Homodimer which binds Holliday junction (HJ) DNA. The HJ becomes 2-fold symmetrical on binding to RuvC with unstacked arms; it has a different conformation from HJ DNA in complex with RuvA. In the full resolvosome a probable DNA-RuvA(4)-RuvB(12)-RuvC(2) complex forms which resolves the HJ. It depends on Mg(2+) as a cofactor.

It is found in the cytoplasm. The catalysed reaction is Endonucleolytic cleavage at a junction such as a reciprocal single-stranded crossover between two homologous DNA duplexes (Holliday junction).. In terms of biological role, the RuvA-RuvB-RuvC complex processes Holliday junction (HJ) DNA during genetic recombination and DNA repair. Endonuclease that resolves HJ intermediates. Cleaves cruciform DNA by making single-stranded nicks across the HJ at symmetrical positions within the homologous arms, yielding a 5'-phosphate and a 3'-hydroxyl group; requires a central core of homology in the junction. The consensus cleavage sequence is 5'-(A/T)TT(C/G)-3'. Cleavage occurs on the 3'-side of the TT dinucleotide at the point of strand exchange. HJ branch migration catalyzed by RuvA-RuvB allows RuvC to scan DNA until it finds its consensus sequence, where it cleaves and resolves the cruciform DNA. In Synechococcus sp. (strain CC9311), this protein is Crossover junction endodeoxyribonuclease RuvC.